A 73-amino-acid chain; its full sequence is MKPEIHPVYPPSRVTCMCGNVVETKSTRGSFSVEICSNCHPFFTGKYKLVDTAGRIDRFRKKYGASPTSAKKA.

Cysteine 16, cysteine 18, cysteine 36, and cysteine 39 together coordinate Zn(2+).

This sequence belongs to the bacterial ribosomal protein bL31 family. Type A subfamily. Part of the 50S ribosomal subunit. The cofactor is Zn(2+).

Functionally, binds the 23S rRNA. This is Large ribosomal subunit protein bL31 from Myxococcus xanthus (strain DK1622).